We begin with the raw amino-acid sequence, 131 residues long: Large ribosomal subunit protein eL32 (131 aa).

Belongs to the eukaryotic ribosomal protein eL32 family.

This chain is Large ribosomal subunit protein eL32 (RPL32), found in Eremothecium gossypii (strain ATCC 10895 / CBS 109.51 / FGSC 9923 / NRRL Y-1056) (Yeast).